Here is a 280-residue protein sequence, read N- to C-terminus: Protease HtpX (280 aa).

2 consecutive transmembrane segments (helical) span residues 7-26 (TFIL…GLLG) and 30-49 (GMLI…YWYS). His129 provides a ligand contact to Zn(2+). Glu130 is a catalytic residue. Residue His133 participates in Zn(2+) binding. 2 helical membrane-spanning segments follow: residues 146-166 (ATIA…SMFG) and 178-198 (VVGM…QMAI). Glu203 lines the Zn(2+) pocket.

Belongs to the peptidase M48B family. Requires Zn(2+) as cofactor.

It localises to the cell inner membrane. The chain is Protease HtpX from Legionella pneumophila subsp. pneumophila (strain Philadelphia 1 / ATCC 33152 / DSM 7513).